We begin with the raw amino-acid sequence, 144 residues long: Large ribosomal subunit protein uL15 (144 aa).

Residues 1 to 51 form a disordered region; sequence MELNSIKPGSGSKHAKRRVGRGIGSGLGKTAGRGHKGQKSRAGGYHKVGFE. The span at 21–31 shows a compositional bias: gly residues; the sequence is RGIGSGLGKTA.

This sequence belongs to the universal ribosomal protein uL15 family. Part of the 50S ribosomal subunit.

In terms of biological role, binds to the 23S rRNA. This chain is Large ribosomal subunit protein uL15, found in Leptothrix cholodnii (strain ATCC 51168 / LMG 8142 / SP-6) (Leptothrix discophora (strain SP-6)).